Reading from the N-terminus, the 533-residue chain is Chromosomal replication initiator protein DnaA (533 aa).

A domain I, interacts with DnaA modulators region spans residues 1 to 72; sequence MNDFWQHCSA…DLARDFWNAP (72 aa). The segment at 72–196 is domain II; that stretch reads PIEVQFVLDP…EAADSMYERS (125 aa). Residues 83 to 110 form a disordered region; that stretch reads AGQRSPAGATPLAPRAPLPSANPAPVGP. Over residues 96–110 the composition is skewed to pro residues; sequence PRAPLPSANPAPVGP. The tract at residues 197-413 is domain III, AAA+ region; sequence KLNPVLTFDN…GALRKILAYS (217 aa). ATP-binding residues include G241, G243, K244, and T245. The domain IV, binds dsDNA stretch occupies residues 414 to 533; sequence KFHGREITIE…LHVLEQTLKG (120 aa).

The protein belongs to the DnaA family. Oligomerizes as a right-handed, spiral filament on DNA at oriC.

The protein resides in the cytoplasm. In terms of biological role, plays an essential role in the initiation and regulation of chromosomal replication. ATP-DnaA binds to the origin of replication (oriC) to initiate formation of the DNA replication initiation complex once per cell cycle. Binds the DnaA box (a 9 base pair repeat at the origin) and separates the double-stranded (ds)DNA. Forms a right-handed helical filament on oriC DNA; dsDNA binds to the exterior of the filament while single-stranded (ss)DNA is stabiized in the filament's interior. The ATP-DnaA-oriC complex binds and stabilizes one strand of the AT-rich DNA unwinding element (DUE), permitting loading of DNA polymerase. After initiation quickly degrades to an ADP-DnaA complex that is not apt for DNA replication. Binds acidic phospholipids. The sequence is that of Chromosomal replication initiator protein DnaA from Burkholderia mallei (strain NCTC 10247).